The sequence spans 559 residues: MSQASSSPGEGPSSEAAAISEAEAASGSFGRLHCQVLRLITNVEGGSLEAGRLRLLDLRTNIEVSRPSVLCCFQENKSPHDTVDLTDLNIKGRCVVGEQDRLLVDLNNFGPRRLTPGSENNTVSVLAFALPLDRVPVSGLHLFQSQRRGGEENRPRMEARAIIRRTAHHWAVRLTVTPNWRRRTDSSLEAGQIFVSQFAFRAGAIPLTLVDALEQLACSDPNTYIHKTETDERGQWIMLFLHHDSPHPPTSVFLHFSVYTHRAEVVARHNPYPHLRRLPDNGFQLLIPKSFTLTRIHPEYIVQIQNAFETNQTHDTIFFPENIPGVSIEAGPLPDRVRITLRVTLTGDQAVHLEHRQPLGRIHFFRRGFWTLTPGKPDKIKRPQVQLRAGLFPRSNVMRGAVSEFLPQSPGLPPTEEEEEEEEEDDEDDLSSTPTPTPLSEAMFAGFEEASGDEDSDTQAGLSRALILTGQRRRSGNNGALTLVIPSWHVFASLDDLVPLTVSVQHAALRPTSYLRSDMDGDVRTAADISSTLRSVPAPRPSPISTASTSSTPRSRPRI.

Cys218 bears the S-nitrosocysteine; by host mark. Residue Thr223 is modified to Phosphothreonine. Disordered regions lie at residues 404-440 (EFLPQSPGLPPTEEEEEEEEEDDEDDLSSTPTPTPLS) and 530-559 (SSTLRSVPAPRPSPISTASTSSTPRSRPRI). A compositionally biased stretch (acidic residues) spans 415 to 430 (TEEEEEEEEEDDEDDL). 2 stretches are compositionally biased toward low complexity: residues 431–440 (SSTPTPTPLS) and 543–559 (PISTASTSSTPRSRPRI).

It belongs to the herpesviridae pp71 family. Interacts with the host protein DAXX; this interaction takes place at ND10 and induces the reversal of DAXX-mediated repression of viral transcription. Interacts with UL35. Interacts with host TMEM173/STING1; this interaction inhibits the cGAS/STING pathway. Interacts with host RB1; this interaction mediates RB1 proteasomal degradation. In terms of processing, S-nitrosylation limits ability to undermine the cGAS/STING antiviral pathway.

Its subcellular location is the virion tegument. The protein localises to the host nucleus. It is found in the host endoplasmic reticulum. Functionally, stimulates viral immediate-early (IE) transcription. Plays a role in the inhibition of the host innate repsonse by targeting STING1 and thus the cGAS-STING pathway. Also counteracts host DAXX-mediated repression of viral transcription. Displaces a DAXX-binding protein, ATRX, from nuclear domain 10 sites (ND10) shortly after infection. Increases the basal level of SUMOylated DAXX in infected cells. Stimulates quiescent cells to re-enter the cell cycle, proceed through G1 and enter the S phase. Interacts with hypophosphorylated forms of RB1 and induces their degradation by the proteasome without involving ubiquitin conjugation. The protein is Protein pp71 (UL82) of Homo sapiens (Human).